Consider the following 216-residue polypeptide: Proenkephalin-A-B (216 aa).

5 propeptides span residues 64 to 85 (MDEL…LAKN), 93 to 131 (EYDS…GEMN), 144 to 155 (STDLEDETRGIQ), 165 to 175 (VGRPEWWQDYQ), and 183 to 207 (TRFT…PDME). The tract at residues 114–133 (PESAIYHDNNSETPGEMNKR) is disordered.

Belongs to the opioid neuropeptide precursor family. In terms of processing, the N-terminal domain contains 6 conserved cysteines thought to be involved in disulfide bonding and/or processing.

Its subcellular location is the secreted. Functionally, enkephalin neuropeptides compete with and mimic the effects of opiate drugs. They play a role in a number of physiologic functions, including pain perception and responses to stress. This is Proenkephalin-A-B (penk-b) from Xenopus laevis (African clawed frog).